The primary structure comprises 153 residues: MAAETASGYIQHHLQNLTYGQLPDGSWGFAHSAAEAKAMGFWAFHLDTLGWSVALGLIFLLIFRMAAKKATSGQPGGLQNFVEVMVDFVNGSVKDSFHGRSPVIAPLALTIFVWVFLMNAVDLIPVDWIPQLAILISGDPHIPFRAVSTTDPN.

2 helical membrane-spanning segments follow: residues 43 to 63 and 104 to 124; these read AFHLDTLGWSVALGLIFLLIF and IAPLALTIFVWVFLMNAVDLI.

It belongs to the ATPase A chain family. In terms of assembly, F-type ATPases have 2 components, CF(1) - the catalytic core - and CF(0) - the membrane proton channel. CF(1) has five subunits: alpha(3), beta(3), gamma(1), delta(1), epsilon(1). CF(0) has three main subunits: a(1), b(2) and c(9-12). The alpha and beta chains form an alternating ring which encloses part of the gamma chain. CF(1) is attached to CF(0) by a central stalk formed by the gamma and epsilon chains, while a peripheral stalk is formed by the delta and b chains.

It is found in the cell inner membrane. Key component of the proton channel; it plays a direct role in the translocation of protons across the membrane. This Pseudomonas putida (Arthrobacter siderocapsulatus) protein is ATP synthase subunit a (atpB).